The sequence spans 596 residues: ATP-dependent RNA helicase dbp3 (596 aa).

A compositionally biased stretch (basic and acidic residues) spans 1–17 (MPKRTLEDTELNPRDNY). 2 disordered regions span residues 1–87 (MPKR…ESTS) and 115–139 (EEKVDIPESTDSATPISVAPQQNGT). Positions 21 to 30 (SSKKSRKEKR) are enriched in basic residues. Positions 47 to 120 (IDIEVESKEA…KEGKEEKVDI (74 aa)) form a coiled coil. Residues 123-139 (STDSATPISVAPQQNGT) show a composition bias toward polar residues. A Q motif motif is present at residues 180–207 (IKFDYLPITDSAQRAPFKDFKAPTPIQA). The Helicase ATP-binding domain occupies 210-386 (WPFLLAGRDV…STFMTSPVKI (177 aa)). 223–230 (AETGSGKT) provides a ligand contact to ATP. Residues 332-335 (DEAD) carry the DEAD box motif. The Helicase C-terminal domain maps to 417 to 566 (RLMQLLKQYQ…PVPDELLKFG (150 aa)).

This sequence belongs to the DEAD box helicase family. DDX5/DBP2 subfamily.

Its subcellular location is the nucleus. It is found in the nucleolus. The catalysed reaction is ATP + H2O = ADP + phosphate + H(+). ATP-dependent RNA helicase required for 60S ribosomal subunit synthesis. Involved in efficient pre-rRNA processing, predominantly at site A3, which is necessary for the normal formation of 25S and 5.8S rRNAs. The sequence is that of ATP-dependent RNA helicase dbp3 (dbp3) from Sclerotinia sclerotiorum (strain ATCC 18683 / 1980 / Ss-1) (White mold).